The sequence spans 78 residues: Protein FAM240B (78 aa).

Belongs to the FAM240 family.

The protein is Protein FAM240B of Homo sapiens (Human).